Here is a 139-residue protein sequence, read N- to C-terminus: Large ribosomal subunit protein bL17 (139 aa).

Belongs to the bacterial ribosomal protein bL17 family. As to quaternary structure, part of the 50S ribosomal subunit. Contacts protein L32.

The polypeptide is Large ribosomal subunit protein bL17 (Myxococcus xanthus (strain DK1622)).